Consider the following 127-residue polypeptide: Large ribosomal subunit protein bL20 (127 aa).

This sequence belongs to the bacterial ribosomal protein bL20 family.

Functionally, binds directly to 23S ribosomal RNA and is necessary for the in vitro assembly process of the 50S ribosomal subunit. It is not involved in the protein synthesizing functions of that subunit. In Corynebacterium diphtheriae (strain ATCC 700971 / NCTC 13129 / Biotype gravis), this protein is Large ribosomal subunit protein bL20.